The chain runs to 148 residues: Cystatin-C (148 aa).

An N-terminal signal peptide occupies residues 1 to 30; sequence MVGSPRAPLLLLASLIVALALALAVSPAAA. The residue at position 31 (Gln31) is a Pyrrolidone carboxylic acid. The Secondary area of contact motif lies at 84–88; that stretch reads QVVSG. 2 disulfide bridges follow: Cys102/Cys112 and Cys126/Cys146.

The protein localises to the secreted. Functionally, this is a thiol proteinase inhibitor. This chain is Cystatin-C (CST3), found in Bos taurus (Bovine).